A 454-amino-acid chain; its full sequence is Bifunctional protein GlmU (454 aa).

The segment at 1-240 (MNVSVVILAA…EEEFMGVNSK (240 aa)) is pyrophosphorylase. UDP-N-acetyl-alpha-D-glucosamine-binding positions include 8-11 (LAAG), lysine 22, and 87-88 (GT). Aspartate 119 serves as a coordination point for Mg(2+). UDP-N-acetyl-alpha-D-glucosamine-binding residues include glycine 152, glutamate 166, asparagine 181, and asparagine 238. Mg(2+) is bound at residue asparagine 238. Residues 241–261 (IQLACAQEIMLQRLREKAMEQ) are linker. The tract at residues 262–454 (GVIMNLPHTI…SDKNEEKKEQ (193 aa)) is N-acetyltransferase. Residues arginine 325 and lysine 342 each contribute to the UDP-N-acetyl-alpha-D-glucosamine site. The Proton acceptor role is filled by histidine 353. UDP-N-acetyl-alpha-D-glucosamine-binding residues include tyrosine 356 and asparagine 367. Residues alanine 370, 376 to 377 (NY), serine 395, alanine 413, and arginine 430 each bind acetyl-CoA.

This sequence in the N-terminal section; belongs to the N-acetylglucosamine-1-phosphate uridyltransferase family. The protein in the C-terminal section; belongs to the transferase hexapeptide repeat family. As to quaternary structure, homotrimer. Mg(2+) serves as cofactor.

It is found in the cytoplasm. The catalysed reaction is alpha-D-glucosamine 1-phosphate + acetyl-CoA = N-acetyl-alpha-D-glucosamine 1-phosphate + CoA + H(+). The enzyme catalyses N-acetyl-alpha-D-glucosamine 1-phosphate + UTP + H(+) = UDP-N-acetyl-alpha-D-glucosamine + diphosphate. It functions in the pathway nucleotide-sugar biosynthesis; UDP-N-acetyl-alpha-D-glucosamine biosynthesis; N-acetyl-alpha-D-glucosamine 1-phosphate from alpha-D-glucosamine 6-phosphate (route II): step 2/2. The protein operates within nucleotide-sugar biosynthesis; UDP-N-acetyl-alpha-D-glucosamine biosynthesis; UDP-N-acetyl-alpha-D-glucosamine from N-acetyl-alpha-D-glucosamine 1-phosphate: step 1/1. It participates in bacterial outer membrane biogenesis; LPS lipid A biosynthesis. Catalyzes the last two sequential reactions in the de novo biosynthetic pathway for UDP-N-acetylglucosamine (UDP-GlcNAc). The C-terminal domain catalyzes the transfer of acetyl group from acetyl coenzyme A to glucosamine-1-phosphate (GlcN-1-P) to produce N-acetylglucosamine-1-phosphate (GlcNAc-1-P), which is converted into UDP-GlcNAc by the transfer of uridine 5-monophosphate (from uridine 5-triphosphate), a reaction catalyzed by the N-terminal domain. The protein is Bifunctional protein GlmU of Helicobacter hepaticus (strain ATCC 51449 / 3B1).